A 276-amino-acid polypeptide reads, in one-letter code: DNA repair protein RecO (276 aa).

The protein belongs to the RecO family.

In terms of biological role, involved in DNA repair and RecF pathway recombination. In Mycobacterium sp. (strain JLS), this protein is DNA repair protein RecO.